The sequence spans 622 residues: Iron transport multicopper oxidase FET5 (622 aa).

Positions 1 to 18 (MLFYSFVWSVLAASVALA) are cleaved as a signal peptide. The Extracellular segment spans residues 19–573 (KTHKLNYTAS…PKGFTTEGYL (555 aa)). Residue Asn-24 is glycosylated (N-linked (GlcNAc...) asparagine). Plastocyanin-like domains are found at residues 43-146 (IGFN…FIIH) and 192-301 (NILF…IQMR). Residues His-79 and His-81 each coordinate Cu cation. N-linked (GlcNAc...) asparagine glycosylation is found at Asn-86 and Asn-115. The Cu cation site is built by His-128 and His-130. N-linked (GlcNAc...) asparagine glycosylation is found at Asn-196, Asn-200, Asn-246, Asn-295, and Asn-364. The 123-residue stretch at 392-514 (GDNINAQLLK…QGLASVFIEA (123 aa)) folds into the Plastocyanin-like 3 domain. Cu cation is bound by residues His-418, His-421, and His-423. Asn-455 is a glycosylation site (N-linked (GlcNAc...) asparagine). Cu cation contacts are provided by His-496, Cys-497, His-498, and His-502. The helical transmembrane segment at 574–594 (ALIISTIIGVWGLYSIAQYGI) threads the bilayer. At 595-622 (GEVIPNDEKVYHTLREILAENEIEVSRG) the chain is on the cytoplasmic side.

Belongs to the multicopper oxidase family. As to quaternary structure, interacts with FTH1. Requires Cu cation as cofactor.

The protein localises to the cell membrane. In terms of biological role, iron transport multicopper oxidase, which is required for Fe(2+) high affinity uptake. May be required to oxidize Fe(2+) and release it from the transporter. Essential component of copper-dependent iron transport. The protein is Iron transport multicopper oxidase FET5 (FET5) of Saccharomyces cerevisiae (strain ATCC 204508 / S288c) (Baker's yeast).